We begin with the raw amino-acid sequence, 231 residues long: Probable amino-acid ABC transporter permease protein y4tG (231 aa).

Transmembrane regions (helical) follow at residues 9–29 (TGNG…MGLI), 32–52 (LQAA…FAVL), 64–84 (AAVL…FFLY), 86–106 (VLPE…ALGI), 161–181 (YLVS…VEML), and 196–216 (VPLS…SALV). The ABC transmembrane type-1 domain maps to 28-217 (LITTLQAAFL…LTIVASALVR (190 aa)).

The protein belongs to the binding-protein-dependent transport system permease family. HisMQ subfamily.

The protein resides in the cell inner membrane. Its function is as follows. Probably part of the binding-protein-dependent transport system y4tEFGH for an amino acid. Probably responsible for the translocation of the substrate across the membrane. This is Probable amino-acid ABC transporter permease protein y4tG from Sinorhizobium fredii (strain NBRC 101917 / NGR234).